The primary structure comprises 176 residues: Xanthine-guanine phosphoribosyltransferase (176 aa).

Residues 51–52, Arg-88, and 111–119 contribute to the 5-phospho-alpha-D-ribose 1-diphosphate site; these read RG and DDLVDSGKT. Arg-88 is a GMP binding site. Position 112 (Asp-112) interacts with Mg(2+). Positions 115 and 158 each coordinate guanine. Asp-115 and Ile-158 together coordinate xanthine. GMP is bound by residues 115–119 and 157–158; these read DSGKT and WI.

This sequence belongs to the purine/pyrimidine phosphoribosyltransferase family. XGPT subfamily. Homotetramer. The cofactor is Mg(2+).

The protein resides in the cell inner membrane. The enzyme catalyses GMP + diphosphate = guanine + 5-phospho-alpha-D-ribose 1-diphosphate. It carries out the reaction XMP + diphosphate = xanthine + 5-phospho-alpha-D-ribose 1-diphosphate. It catalyses the reaction IMP + diphosphate = hypoxanthine + 5-phospho-alpha-D-ribose 1-diphosphate. The protein operates within purine metabolism; GMP biosynthesis via salvage pathway; GMP from guanine: step 1/1. Its pathway is purine metabolism; XMP biosynthesis via salvage pathway; XMP from xanthine: step 1/1. In terms of biological role, purine salvage pathway enzyme that catalyzes the transfer of the ribosyl-5-phosphate group from 5-phospho-alpha-D-ribose 1-diphosphate (PRPP) to the N9 position of the 6-oxopurines guanine and xanthine to form the corresponding ribonucleotides GMP (guanosine 5'-monophosphate) and XMP (xanthosine 5'-monophosphate), with the release of PPi. To a lesser extent, also acts on hypoxanthine. In Ruegeria sp. (strain TM1040) (Silicibacter sp.), this protein is Xanthine-guanine phosphoribosyltransferase.